The primary structure comprises 492 residues: Glutamyl-tRNA(Gln) amidotransferase subunit A (492 aa).

Active-site charge relay system residues include Lys78 and Ser158. Ser182 functions as the Acyl-ester intermediate in the catalytic mechanism.

This sequence belongs to the amidase family. GatA subfamily. In terms of assembly, heterotrimer of A, B and C subunits.

It carries out the reaction L-glutamyl-tRNA(Gln) + L-glutamine + ATP + H2O = L-glutaminyl-tRNA(Gln) + L-glutamate + ADP + phosphate + H(+). Its function is as follows. Allows the formation of correctly charged Gln-tRNA(Gln) through the transamidation of misacylated Glu-tRNA(Gln) in organisms which lack glutaminyl-tRNA synthetase. The reaction takes place in the presence of glutamine and ATP through an activated gamma-phospho-Glu-tRNA(Gln). This chain is Glutamyl-tRNA(Gln) amidotransferase subunit A, found in Orientia tsutsugamushi (strain Boryong) (Rickettsia tsutsugamushi).